A 754-amino-acid polypeptide reads, in one-letter code: 5-methyltetrahydropteroyltriglutamate--homocysteine methyltransferase (754 aa).

Residues arginine 17 to lysine 20 and lysine 117 each bind 5-methyltetrahydropteroyltri-L-glutamate. Residues isoleucine 431–serine 433 and glutamate 484 each bind L-homocysteine. L-methionine contacts are provided by residues isoleucine 431 to serine 433 and glutamate 484. 5-methyltetrahydropteroyltri-L-glutamate is bound by residues arginine 515 to cysteine 516 and tryptophan 561. Residue aspartate 599 coordinates L-homocysteine. Aspartate 599 contacts L-methionine. Residue glutamate 605 coordinates 5-methyltetrahydropteroyltri-L-glutamate. Positions 641, 643, and 665 each coordinate Zn(2+). Histidine 694 (proton donor) is an active-site residue. Position 726 (cysteine 726) interacts with Zn(2+).

Belongs to the vitamin-B12 independent methionine synthase family. Zn(2+) is required as a cofactor.

It carries out the reaction 5-methyltetrahydropteroyltri-L-glutamate + L-homocysteine = tetrahydropteroyltri-L-glutamate + L-methionine. The protein operates within amino-acid biosynthesis; L-methionine biosynthesis via de novo pathway; L-methionine from L-homocysteine (MetE route): step 1/1. In terms of biological role, catalyzes the transfer of a methyl group from 5-methyltetrahydrofolate to homocysteine resulting in methionine formation. This Salmonella typhi protein is 5-methyltetrahydropteroyltriglutamate--homocysteine methyltransferase.